We begin with the raw amino-acid sequence, 441 residues long: UDP-N-acetylglucosamine--N-acetylmuramyl-(pentapeptide) pyrophosphoryl-undecaprenol N-acetylglucosamine transferase (441 aa).

UDP-N-acetyl-alpha-D-glucosamine is bound by residues 28–30 (TGG), asparagine 140, arginine 176, serine 204, isoleucine 257, and glutamine 302.

The protein belongs to the glycosyltransferase 28 family. MurG subfamily.

The protein localises to the cell inner membrane. It carries out the reaction di-trans,octa-cis-undecaprenyl diphospho-N-acetyl-alpha-D-muramoyl-L-alanyl-D-glutamyl-meso-2,6-diaminopimeloyl-D-alanyl-D-alanine + UDP-N-acetyl-alpha-D-glucosamine = di-trans,octa-cis-undecaprenyl diphospho-[N-acetyl-alpha-D-glucosaminyl-(1-&gt;4)]-N-acetyl-alpha-D-muramoyl-L-alanyl-D-glutamyl-meso-2,6-diaminopimeloyl-D-alanyl-D-alanine + UDP + H(+). It functions in the pathway cell wall biogenesis; peptidoglycan biosynthesis. Cell wall formation. Catalyzes the transfer of a GlcNAc subunit on undecaprenyl-pyrophosphoryl-MurNAc-pentapeptide (lipid intermediate I) to form undecaprenyl-pyrophosphoryl-MurNAc-(pentapeptide)GlcNAc (lipid intermediate II). The polypeptide is UDP-N-acetylglucosamine--N-acetylmuramyl-(pentapeptide) pyrophosphoryl-undecaprenol N-acetylglucosamine transferase (Xanthomonas oryzae pv. oryzae (strain MAFF 311018)).